Reading from the N-terminus, the 310-residue chain is Methionyl-tRNA formyltransferase (310 aa).

111-114 contacts (6S)-5,6,7,8-tetrahydrofolate; sequence SLLP.

Belongs to the Fmt family.

The catalysed reaction is L-methionyl-tRNA(fMet) + (6R)-10-formyltetrahydrofolate = N-formyl-L-methionyl-tRNA(fMet) + (6S)-5,6,7,8-tetrahydrofolate + H(+). Functionally, attaches a formyl group to the free amino group of methionyl-tRNA(fMet). The formyl group appears to play a dual role in the initiator identity of N-formylmethionyl-tRNA by promoting its recognition by IF2 and preventing the misappropriation of this tRNA by the elongation apparatus. The polypeptide is Methionyl-tRNA formyltransferase (Rhodopseudomonas palustris (strain TIE-1)).